Here is a 205-residue protein sequence, read N- to C-terminus: Holliday junction branch migration complex subunit RuvA (205 aa).

The segment at 1-64 is domain I; it reads MIGKLKGVID…EDQIKLFGFR (64 aa). The segment at 65-143 is domain II; sequence TDHEREWFRL…SFANVDPTVV (79 aa). The segment at 144-154 is flexible linker; sequence HLAGDLDDQRA. The tract at residues 154–205 is domain III; it reads APRPVRDAISALVNLGYGQPQATAAIAAASRGAGENAETAQLIRLGLKELSK.

The protein belongs to the RuvA family. Homotetramer. Forms an RuvA(8)-RuvB(12)-Holliday junction (HJ) complex. HJ DNA is sandwiched between 2 RuvA tetramers; dsDNA enters through RuvA and exits via RuvB. An RuvB hexamer assembles on each DNA strand where it exits the tetramer. Each RuvB hexamer is contacted by two RuvA subunits (via domain III) on 2 adjacent RuvB subunits; this complex drives branch migration. In the full resolvosome a probable DNA-RuvA(4)-RuvB(12)-RuvC(2) complex forms which resolves the HJ.

It is found in the cytoplasm. Functionally, the RuvA-RuvB-RuvC complex processes Holliday junction (HJ) DNA during genetic recombination and DNA repair, while the RuvA-RuvB complex plays an important role in the rescue of blocked DNA replication forks via replication fork reversal (RFR). RuvA specifically binds to HJ cruciform DNA, conferring on it an open structure. The RuvB hexamer acts as an ATP-dependent pump, pulling dsDNA into and through the RuvAB complex. HJ branch migration allows RuvC to scan DNA until it finds its consensus sequence, where it cleaves and resolves the cruciform DNA. The chain is Holliday junction branch migration complex subunit RuvA from Nitrobacter winogradskyi (strain ATCC 25391 / DSM 10237 / CIP 104748 / NCIMB 11846 / Nb-255).